The sequence spans 292 residues: Elongation factor Ts (292 aa).

Positions 79–82 (TDFV) are involved in Mg(2+) ion dislocation from EF-Tu.

This sequence belongs to the EF-Ts family.

The protein resides in the cytoplasm. In terms of biological role, associates with the EF-Tu.GDP complex and induces the exchange of GDP to GTP. It remains bound to the aminoacyl-tRNA.EF-Tu.GTP complex up to the GTP hydrolysis stage on the ribosome. The chain is Elongation factor Ts from Xanthomonas axonopodis pv. citri (strain 306).